Consider the following 83-residue polypeptide: Mitochondrial import inner membrane translocase subunit Tim8 B (83 aa).

Ala2 bears the N-acetylalanine mark. A Twin CX3C motif motif is present at residues 36 to 59 (CWDKCVEKPGNRLDSRTENCLSSC). 2 disulfide bridges follow: Cys36-Cys59 and Cys40-Cys55.

It belongs to the small Tim family. In terms of assembly, heterohexamer; possibly composed of 3 copies of TIMM8B and 3 copies of TIMM13, named soluble 70 kDa complex. Associates with the TIM22 complex, whose core is composed of TIMM22.

It localises to the mitochondrion inner membrane. Probable mitochondrial intermembrane chaperone that participates in the import and insertion of some multi-pass transmembrane proteins into the mitochondrial inner membrane. Also required for the transfer of beta-barrel precursors from the TOM complex to the sorting and assembly machinery (SAM complex) of the outer membrane. Acts as a chaperone-like protein that protects the hydrophobic precursors from aggregation and guide them through the mitochondrial intermembrane space. This Bos taurus (Bovine) protein is Mitochondrial import inner membrane translocase subunit Tim8 B (TIMM8B).